Here is a 1085-residue protein sequence, read N- to C-terminus: MAGPGSLCCASRGASALLATALLYAALGDVVRSEQQIPLSVVKLWASAFGGEIKSIAAKYSGSQLLQKKYKEYEKDVAIEEIDGLQLVKKLAKNMEEMFHKKSEAVRRLVEAAEEAHLKHEFDADLQYEYFNAVLINERDKDGNFLELGKEFILAPNDHFNNLPVNISLSDVQVPTNMYNKDPAIVNGVYWSESLNKVFVDNFDRDPSLIWQYFGSAKGFFRQYPGIKWEPDENGVIAFDCRNRKWYIQAATSPKDVVILVDVSGSMKGLRLTIAKQTVSSILDTLGDDDFFNIITYNEELHYVEPCLNGTLVQADRTNKEHFREHLDKLFAKGIGMLDIALNEAFNVLSDFNHTGQGSICSQAIMLITDGAVDTYDTIFAKYNWPERKVRIFTYLIGREAAFADNLKWMACANKGFFTQISTLADVQENVMEYLHVLSRPKVIDQEHDVVWTEAYIDSTLADDQGLVLMTTVAMPVFSKQNETRSKGILLGVVGTDVPVKELLKTIPKYKLGIHGYAFAITNNGYILTHPELRPLYEEGKKRRKPNYSSVDLSEVEWEDRDDVLRNAMVNRKTGKFSMEVKKTVDKGKRVLVMTNDYYYTDIKGAPFSLGVALSRGHGKYFFRGNVTIEEGLHDLEHPDVSLADEWSYCNTDLHPEHRHLSQLEAIKLYLKGKEPLLQCDKELIQEVLFDAVVSAPIEAYWTSLALNKSENSDKGVEVAFLGTRTGLSRINLFVGAEQLTNQDFLKARDKENIFNADHFPLWYRRAAEQIPGSFVYSIPFSTGTVNKSNVVTASTSIQLLDERKSPVVAAVGIQMKLEFFQRKFWTASRQCASLDGKCSISCDDETVNCYLIDNNGFILVSEDYTQTGDFFGEVEGAVMNKLLTMGSFKRITLYDYQAMCRANKESSDSAHGLLDPYKAFLSAAKWIVTELVLFLVEFNLCSWWHSDMTAKAQKLKQTLEPCDTEYPAFVSERTIKETTGNIACEDCSKSFVIQQIPSSNLFMVVVDSSCLCESVAPITMAPIEIRYNESLKCERLKAQKIRRRPESCHGFHPEENARECGGASSLQAQVALLLLPLVSSLFSR.

The signal sequence occupies residues 1-33 (MAGPGSLCCASRGASALLATALLYAALGDVVRS). Over 34 to 1062 (EQQIPLSVVK…HPEENARECG (1029 aa)) the chain is Extracellular. Asn166 carries an N-linked (GlcNAc...) asparagine glycan. Positions 256–438 (DVVILVDVSG…ENVMEYLHVL (183 aa)) constitute a VWFA domain. A divalent metal cation is bound by residues Asp262, Ser264, and Ser266. Positions 262–266 (DVSGS) match the MIDAS-like motif motif. An N-linked (GlcNAc...) asparagine glycan is attached at Asn309. Cys412 and Cys1049 are disulfide-bonded. Positions 452 to 543 (WTEAYIDSTL…RPLYEEGKKR (92 aa)) constitute a Cache domain. Asn547 and Asn626 each carry an N-linked (GlcNAc...) asparagine glycan. Tyr918 is modified (phosphotyrosine). A helical transmembrane segment spans residues 1063–1083 (GASSLQAQVALLLLPLVSSLF). Topologically, residues 1084 to 1085 (SR) are cytoplasmic.

This sequence belongs to the calcium channel subunit alpha-2/delta family. In terms of assembly, dimer formed of alpha-2-2 and delta-2 chains; disulfide-linked. Voltage-dependent calcium channels are multisubunit complexes, consisting of alpha-1 (CACNA1), alpha-2 (CACNA2D), beta (CACNB) and delta (CACNA2D) subunits in a 1:1:1:1 ratio. N-glycosylated. In terms of processing, may be proteolytically processed into subunits alpha-2-3 and delta-3 that are disulfide-linked. It is however unclear whether such cleavage really takes place in vivo and has a functional role. In heart, it is expressed in atrium but not in ventricle.

It is found in the membrane. The alpha-2/delta subunit of voltage-dependent calcium channels regulates calcium current density and activation/inactivation kinetics of the calcium channel. Acts as a regulatory subunit for P/Q-type calcium channel (CACNA1A), N-type (CACNA1B), L-type (CACNA1C OR CACNA1D) but not T-type (CACNA1G). In Rattus norvegicus (Rat), this protein is Voltage-dependent calcium channel subunit alpha-2/delta-3 (Cacna2d3).